Here is a 97-residue protein sequence, read N- to C-terminus: UPF0729 protein AAEL015238 (97 aa).

The disordered stretch occupies residues 69–97; that stretch reads EVAASGSGSNGTATAVGSEGEAEETKKSQ. Positions 74–83 are enriched in polar residues; the sequence is GSGSNGTATA.

This sequence belongs to the UPF0729 family.

The chain is UPF0729 protein AAEL015238 from Aedes aegypti (Yellowfever mosquito).